The following is a 232-amino-acid chain: Flagellar L-ring protein (232 aa).

The signal sequence occupies residues 1-21 (MQKYALHAYPVMALMVATLTG). Residue Cys22 is the site of N-palmitoyl cysteine attachment. Cys22 carries the S-diacylglycerol cysteine lipid modification.

It belongs to the FlgH family. The basal body constitutes a major portion of the flagellar organelle and consists of four rings (L,P,S, and M) mounted on a central rod.

It is found in the cell outer membrane. The protein resides in the bacterial flagellum basal body. Functionally, assembles around the rod to form the L-ring and probably protects the motor/basal body from shearing forces during rotation. The protein is Flagellar L-ring protein of Salmonella choleraesuis (strain SC-B67).